The primary structure comprises 545 residues: Glucose-6-phosphate isomerase (545 aa).

Catalysis depends on glutamate 351, which acts as the Proton donor. Catalysis depends on residues histidine 382 and lysine 510.

Belongs to the GPI family.

The protein localises to the cytoplasm. It carries out the reaction alpha-D-glucose 6-phosphate = beta-D-fructose 6-phosphate. Its pathway is carbohydrate biosynthesis; gluconeogenesis. It functions in the pathway carbohydrate degradation; glycolysis; D-glyceraldehyde 3-phosphate and glycerone phosphate from D-glucose: step 2/4. Catalyzes the reversible isomerization of glucose-6-phosphate to fructose-6-phosphate. The sequence is that of Glucose-6-phosphate isomerase from Shewanella sp. (strain MR-4).